Consider the following 102-residue polypeptide: NADH-quinone oxidoreductase subunit K (102 aa).

3 consecutive transmembrane segments (helical) span residues 5 to 25 (LGHY…GIFL), 31 to 51 (IVLL…FVAF), and 62 to 82 (VFVF…LAIL).

Belongs to the complex I subunit 4L family. In terms of assembly, NDH-1 is composed of 14 different subunits. Subunits NuoA, H, J, K, L, M, N constitute the membrane sector of the complex.

Its subcellular location is the cell inner membrane. The enzyme catalyses a quinone + NADH + 5 H(+)(in) = a quinol + NAD(+) + 4 H(+)(out). In terms of biological role, NDH-1 shuttles electrons from NADH, via FMN and iron-sulfur (Fe-S) centers, to quinones in the respiratory chain. The immediate electron acceptor for the enzyme in this species is believed to be ubiquinone. Couples the redox reaction to proton translocation (for every two electrons transferred, four hydrogen ions are translocated across the cytoplasmic membrane), and thus conserves the redox energy in a proton gradient. This Methylibium petroleiphilum (strain ATCC BAA-1232 / LMG 22953 / PM1) protein is NADH-quinone oxidoreductase subunit K.